We begin with the raw amino-acid sequence, 461 residues long: Xyloglucan 6-xylosyltransferase 2 (461 aa).

Residues 1–20 are Cytoplasmic-facing; it reads MIERCLGAYRCRRIQRALRQ. Residues 21–40 traverse the membrane as a helical; Signal-anchor for type II membrane protein segment; the sequence is LKVTILCLLLTVVVLRSTIG. Topologically, residues 41-461 are lumenal; it reads AGKFGTPEQD…KAVKVQTNQV (421 aa). A disordered region spans residues 74-95; sequence QTGGDSSSGDGGGNSGGSNNYE. N-linked (GlcNAc...) asparagine glycosylation occurs at Asn-432.

The protein belongs to the glycosyltransferase 34 family. In terms of assembly, homodimer. Interacts with XXT1 and XXT5. Interacts with FUT1 and XLT2.

The protein resides in the golgi apparatus membrane. The enzyme catalyses Transfers an alpha-D-xylosyl residue from UDP-D-xylose to a glucose residue in xyloglucan, forming an alpha-(1-&gt;6)-D-xylosyl-D-glucose linkage.. Xylosyltransferase specific to UDP-D-xylose that accepts both cellopentaose and cellohexaose as substrates, with a better use of cellohexaose, to produce xyloglucan. Adds preferentially the first xylosyl residue to the fourth glucosyl residue from the reducing end of both acceptors. Transfer one xylose mainly to the second glucose residue from the non-reducing end. The acceptor should have a minimum of four glucose residues. Associates with other xyloglucan-synthesizing enzymes to form multiprotein complexes for xyloglucan synthesis in the Golgi. This chain is Xyloglucan 6-xylosyltransferase 2 (XXT2), found in Arabidopsis thaliana (Mouse-ear cress).